The sequence spans 175 residues: Nucleoplasmin-3 (175 aa).

N-acetylalanine is present on alanine 2. Serine 16 carries the post-translational modification Phosphoserine. At arginine 27 the chain carries Omega-N-methylarginine. Phosphoserine is present on residues serine 147 and serine 151.

It belongs to the nucleoplasmin family. As to quaternary structure, interacts with NPM (via N-terminus). Forms a pentamer with NPM at a ratio 4:1 (NPM3/NPM). Two pentamers form a decamer. Phosphorylated. Predominantly expressed in testis.

The protein localises to the nucleus. It localises to the nucleolus. Its function is as follows. Plays a role in the regulation of diverse cellular processes such as ribosome biogenesis, chromatin remodeling or protein chaperoning. Modulates the histone chaperone function and the RNA-binding activity of nucleolar phosphoprotein B23/NPM. Efficiently mediates chromatin remodeling when included in a pentamer containing NPM3 and NPM. The polypeptide is Nucleoplasmin-3 (Npm3) (Mus musculus (Mouse)).